The following is a 373-amino-acid chain: Glutamate 5-kinase (373 aa).

Lysine 15 is a binding site for ATP. Residues serine 55, aspartate 142, and asparagine 154 each coordinate substrate. ATP is bound by residues 174–175 (TD) and 216–222 (TGGMATK). Residues 281–359 (AGSIVVDAGA…SEIERILGFR (79 aa)) enclose the PUA domain.

Belongs to the glutamate 5-kinase family.

The protein localises to the cytoplasm. The enzyme catalyses L-glutamate + ATP = L-glutamyl 5-phosphate + ADP. It functions in the pathway amino-acid biosynthesis; L-proline biosynthesis; L-glutamate 5-semialdehyde from L-glutamate: step 1/2. In terms of biological role, catalyzes the transfer of a phosphate group to glutamate to form L-glutamate 5-phosphate. This is Glutamate 5-kinase from Geobacter sp. (strain M21).